The following is a 107-amino-acid chain: Cytochrome c oxidase assembly protein COX16 homolog, mitochondrial (107 aa).

Over 1 to 14 the chain is Mitochondrial matrix; that stretch reads MFGYAVRRALRKSK. Residues 15–37 form a helical membrane-spanning segment; the sequence is TLRYGVPMLLLIVGGSFGLREFS. Residues 38–107 lie on the Mitochondrial intermembrane side of the membrane; that stretch reads QIRYDAVKIK…PEILKTNKTT (70 aa). Positions 80–107 are disordered; that stretch reads NIRGPRPWEDPDLLQGRNPEILKTNKTT.

Belongs to the COX16 family. Associates with the MITRAC complex. Interacts with MT-CO2/COX; specifically interacts with newly synthesized MT-CO2/COX. Interacts with SCO1, SCO2 and COA6.

The protein localises to the mitochondrion inner membrane. Required for the assembly of the mitochondrial respiratory chain complex IV (CIV), also known as cytochrome c oxidase. Promotes the insertion of copper into the active site of cytochrome c oxidase subunit II (MT-CO2/COX2). Interacts specifically with newly synthesized MT-CO2/COX and its copper center-forming metallochaperones SCO1, SCO2 and COA6. Probably facilitates MT-CO2/COX2 association with the MITRAC assembly intermediate containing MT-CO1/COX1, thereby participating in merging the MT-CO1/COX1 and MT-CO2/COX2 assembly lines. This is Cytochrome c oxidase assembly protein COX16 homolog, mitochondrial from Bos taurus (Bovine).